We begin with the raw amino-acid sequence, 64 residues long: Disintegrin VLO5A (64 aa).

The Disintegrin domain maps to 1 to 64 (NSGNPCCDPV…SDCPRNPYKD (64 aa)). Disulfide bonds link Cys6–Cys29, Cys20–Cys26, Cys25–Cys50, and Cys38–Cys57. The Cell attachment site; atypical (VGD) signature appears at 42–44 (VGD).

Belongs to the venom metalloproteinase (M12B) family. P-II subfamily. P-IIe sub-subfamily. Heterodimer with VLO5B; disulfide-linked. As to expression, expressed by the venom gland.

The protein resides in the secreted. In terms of biological role, poor inhibitor of platelet aggregation. The disintegrin inhibits the adhesion of the alpha-4/beta-1 (ITGA4/ITGB1) integrin to VCAM-1. Inhibition on alpha-IIb/beta-3 (ITGA2B/ITGB3) is low. This chain is Disintegrin VLO5A, found in Macrovipera lebetina obtusa (Levant blunt-nosed viper).